Reading from the N-terminus, the 95-residue chain is Protein J1 homolog (95 aa).

Belongs to the chordopoxvirinae J1 family. As to quaternary structure, homodimer. Part of a complex composed of A30, G7, F10 kinase, A15, D2, D3, and J1. Interacts with A45.

The protein localises to the virion. The protein resides in the host cytoplasm. Functionally, late protein which is a part of a large complex required for early virion morphogenesis. This complex participates in the formation of virosomes and the incorporation of virosomal contents into nascent immature virions. J1 protein is required for DNA packaging during immature virions (IV) formation. The chain is Protein J1 homolog from Sus scrofa (Pig).